Consider the following 73-residue polypeptide: Large ribosomal subunit protein bL31 (73 aa).

The protein belongs to the bacterial ribosomal protein bL31 family. Type A subfamily. As to quaternary structure, part of the 50S ribosomal subunit.

Functionally, binds the 23S rRNA. This chain is Large ribosomal subunit protein bL31, found in Bartonella tribocorum (strain CIP 105476 / IBS 506).